A 103-amino-acid chain; its full sequence is Large ribosomal subunit protein bL21 (103 aa).

The protein belongs to the bacterial ribosomal protein bL21 family. Part of the 50S ribosomal subunit. Contacts protein L20.

In terms of biological role, this protein binds to 23S rRNA in the presence of protein L20. The sequence is that of Large ribosomal subunit protein bL21 from Serratia proteamaculans (strain 568).